The following is a 304-amino-acid chain: Non-specific ribonucleoside hydrolase RihC (304 aa).

Residue His-233 is part of the active site.

It belongs to the IUNH family. RihC subfamily.

Functionally, hydrolyzes both purine and pyrimidine ribonucleosides with a broad-substrate specificity. The protein is Non-specific ribonucleoside hydrolase RihC of Escherichia coli O45:K1 (strain S88 / ExPEC).